Reading from the N-terminus, the 229-residue chain is 2-phytyl-1,4-naphtoquinone methyltransferase (229 aa).

This sequence belongs to the class I-like SAM-binding methyltransferase superfamily. MenG/UbiE family.

The enzyme catalyses demethylphylloquinol + S-adenosyl-L-methionine = phylloquinol + S-adenosyl-L-homocysteine + H(+). It functions in the pathway cofactor biosynthesis; phylloquinone biosynthesis. Functionally, methyltransferase required for the conversion of 2-phytyl-1,4-beta-naphthoquinol to phylloquinol. The polypeptide is 2-phytyl-1,4-naphtoquinone methyltransferase (Trichormus variabilis (strain ATCC 29413 / PCC 7937) (Anabaena variabilis)).